Reading from the N-terminus, the 180-residue chain is Large ribosomal subunit protein uL5 (180 aa).

The protein belongs to the universal ribosomal protein uL5 family. Part of the 50S ribosomal subunit; part of the 5S rRNA/L5/L18/L25 subcomplex. Contacts the 5S rRNA and the P site tRNA. Forms a bridge to the 30S subunit in the 70S ribosome.

Functionally, this is one of the proteins that bind and probably mediate the attachment of the 5S RNA into the large ribosomal subunit, where it forms part of the central protuberance. In the 70S ribosome it contacts protein S13 of the 30S subunit (bridge B1b), connecting the 2 subunits; this bridge is implicated in subunit movement. Contacts the P site tRNA; the 5S rRNA and some of its associated proteins might help stabilize positioning of ribosome-bound tRNAs. The sequence is that of Large ribosomal subunit protein uL5 from Pediococcus pentosaceus (strain ATCC 25745 / CCUG 21536 / LMG 10740 / 183-1w).